Consider the following 379-residue polypeptide: Carbamoyl phosphate synthase small chain (379 aa).

The segment at 1–189 is CPSase; it reads MSKSALLVLE…GLPEAKADSE (189 aa). Residues S47, G241, and G243 each contribute to the L-glutamine site. In terms of domain architecture, Glutamine amidotransferase type-1 spans 193 to 379; that stretch reads HVVAYDFGAK…FIELIKQFRA (187 aa). The Nucleophile role is filled by C269. Residues L270, Q273, N311, G313, and F314 each coordinate L-glutamine. Residues H353 and E355 contribute to the active site.

Belongs to the CarA family. As to quaternary structure, composed of two chains; the small (or glutamine) chain promotes the hydrolysis of glutamine to ammonia, which is used by the large (or ammonia) chain to synthesize carbamoyl phosphate. Tetramer of heterodimers (alpha,beta)4.

It carries out the reaction hydrogencarbonate + L-glutamine + 2 ATP + H2O = carbamoyl phosphate + L-glutamate + 2 ADP + phosphate + 2 H(+). The enzyme catalyses L-glutamine + H2O = L-glutamate + NH4(+). It functions in the pathway amino-acid biosynthesis; L-arginine biosynthesis; carbamoyl phosphate from bicarbonate: step 1/1. The protein operates within pyrimidine metabolism; UMP biosynthesis via de novo pathway; (S)-dihydroorotate from bicarbonate: step 1/3. In terms of biological role, small subunit of the glutamine-dependent carbamoyl phosphate synthetase (CPSase). CPSase catalyzes the formation of carbamoyl phosphate from the ammonia moiety of glutamine, carbonate, and phosphate donated by ATP, constituting the first step of 2 biosynthetic pathways, one leading to arginine and/or urea and the other to pyrimidine nucleotides. The small subunit (glutamine amidotransferase) binds and cleaves glutamine to supply the large subunit with the substrate ammonia. This chain is Carbamoyl phosphate synthase small chain, found in Vibrio cholerae serotype O1 (strain ATCC 39315 / El Tor Inaba N16961).